Here is a 207-residue protein sequence, read N- to C-terminus: Ribonuclease HII (207 aa).

Residues 18-206 (EFIVGVDEVG…VKNILQLLEK (189 aa)) enclose the RNase H type-2 domain. A divalent metal cation contacts are provided by D24, E25, and D115.

Belongs to the RNase HII family. Requires Mn(2+) as cofactor. The cofactor is Mg(2+).

It is found in the cytoplasm. The catalysed reaction is Endonucleolytic cleavage to 5'-phosphomonoester.. Functionally, endonuclease that specifically degrades the RNA of RNA-DNA hybrids. The polypeptide is Ribonuclease HII (Hydrogenovibrio crunogenus (strain DSM 25203 / XCL-2) (Thiomicrospira crunogena)).